We begin with the raw amino-acid sequence, 210 residues long: GEM-like protein 7 (210 aa).

In terms of domain architecture, GRAM spans 88 to 166 (KIYKRLFKVC…CKINGVNQSQ (79 aa)).

This sequence belongs to the GEM family.

This Arabidopsis thaliana (Mouse-ear cress) protein is GEM-like protein 7.